A 585-amino-acid chain; its full sequence is Aspartate--tRNA ligase (585 aa).

Residue E173 coordinates L-aspartate. An aspartate region spans residues 197-200; it reads QTLK. R219 provides a ligand contact to L-aspartate. Residues 219–221 and Q228 each bind ATP; that span reads RDE. An L-aspartate-binding site is contributed by H446. E480 serves as a coordination point for ATP. L-aspartate is bound at residue R487. 532–535 contacts ATP; it reads GLDR.

It belongs to the class-II aminoacyl-tRNA synthetase family. Type 1 subfamily. In terms of assembly, homodimer.

The protein localises to the cytoplasm. It carries out the reaction tRNA(Asp) + L-aspartate + ATP = L-aspartyl-tRNA(Asp) + AMP + diphosphate. In terms of biological role, catalyzes the attachment of L-aspartate to tRNA(Asp) in a two-step reaction: L-aspartate is first activated by ATP to form Asp-AMP and then transferred to the acceptor end of tRNA(Asp). This is Aspartate--tRNA ligase from Bacteroides fragilis (strain YCH46).